Consider the following 584-residue polypeptide: Cytochrome c oxidase subunit 1 (584 aa).

Residues Met-1 to Lys-25 form a disordered region. Residues Ile-43–Ile-63 traverse the membrane as a helical segment. Fe(II)-heme a is bound at residue His-87. 6 helical membrane passes run Val-90–Leu-110, Leu-122–Leu-142, Met-171–Leu-191, Ile-214–Gly-234, Leu-259–Val-279, and Phe-292–Trp-312. Residues His-265 and Tyr-269 each coordinate Cu cation. A cross-link (1'-histidyl-3'-tyrosine (His-Tyr)) is located at residues His-265 to Tyr-269. Cu cation contacts are provided by His-314 and His-315. Transmembrane regions (helical) follow at residues Met-316–Val-336 and Met-360–Leu-380. Position 398 (His-398) interacts with heme a3. A run of 3 helical transmembrane segments spans residues Phe-399 to Phe-419, Ile-434 to Gly-454, and Ile-477 to Phe-497. Residue His-400 participates in Fe(II)-heme a binding. The interval His-564–Arg-584 is disordered.

In terms of assembly, associates with subunits II, III and IV to form cytochrome c oxidase. The 4 subunit cytochrome c oxidase forms a supercomplex with the menaquinol-cytochrome c reductase complex (cytochrome bc1). Cu(2+) serves as cofactor. It depends on heme as a cofactor.

It localises to the cell membrane. The catalysed reaction is 4 Fe(II)-[cytochrome c] + O2 + 8 H(+)(in) = 4 Fe(III)-[cytochrome c] + 2 H2O + 4 H(+)(out). The protein operates within energy metabolism; oxidative phosphorylation. Its function is as follows. Cytochrome c oxidase is the component of the respiratory chain that catalyzes the reduction of oxygen to water. Subunits 1-3 form the functional core of the enzyme complex. CO I is the catalytic subunit of the enzyme. Electrons originating in cytochrome c are transferred via the copper A center of subunit 2 and heme A of subunit 1 to the bimetallic center formed by heme A3 and copper B. The sequence is that of Cytochrome c oxidase subunit 1 (ctaD) from Corynebacterium glutamicum (strain ATCC 13032 / DSM 20300 / JCM 1318 / BCRC 11384 / CCUG 27702 / LMG 3730 / NBRC 12168 / NCIMB 10025 / NRRL B-2784 / 534).